A 247-amino-acid polypeptide reads, in one-letter code: NH(3)-dependent NAD(+) synthetase (247 aa).

29-36 contributes to the ATP binding site; that stretch reads GLSGGVDS. D35 serves as a coordination point for Mg(2+). R112 contacts deamido-NAD(+). T132 serves as a coordination point for ATP. E137 lines the Mg(2+) pocket. Positions 145 and 152 each coordinate deamido-NAD(+). Residues K161 and S183 each coordinate ATP. Residue 233–234 coordinates deamido-NAD(+); the sequence is HK.

It belongs to the NAD synthetase family. As to quaternary structure, homodimer.

It carries out the reaction deamido-NAD(+) + NH4(+) + ATP = AMP + diphosphate + NAD(+) + H(+). Its pathway is cofactor biosynthesis; NAD(+) biosynthesis; NAD(+) from deamido-NAD(+) (ammonia route): step 1/1. Catalyzes the ATP-dependent amidation of deamido-NAD to form NAD. Uses ammonia as a nitrogen source. The polypeptide is NH(3)-dependent NAD(+) synthetase (Archaeoglobus fulgidus (strain ATCC 49558 / DSM 4304 / JCM 9628 / NBRC 100126 / VC-16)).